The chain runs to 398 residues: UDP-N-acetylglucosamine--N-acetylmuramyl-(pentapeptide) pyrophosphoryl-undecaprenol N-acetylglucosamine transferase (398 aa).

UDP-N-acetyl-alpha-D-glucosamine-binding positions include 11-13 (TGG), N124, R164, S192, and Q318.

This sequence belongs to the glycosyltransferase 28 family. MurG subfamily.

The protein localises to the cell membrane. It catalyses the reaction di-trans,octa-cis-undecaprenyl diphospho-N-acetyl-alpha-D-muramoyl-L-alanyl-D-glutamyl-meso-2,6-diaminopimeloyl-D-alanyl-D-alanine + UDP-N-acetyl-alpha-D-glucosamine = di-trans,octa-cis-undecaprenyl diphospho-[N-acetyl-alpha-D-glucosaminyl-(1-&gt;4)]-N-acetyl-alpha-D-muramoyl-L-alanyl-D-glutamyl-meso-2,6-diaminopimeloyl-D-alanyl-D-alanine + UDP + H(+). It participates in cell wall biogenesis; peptidoglycan biosynthesis. Functionally, cell wall formation. Catalyzes the transfer of a GlcNAc subunit on undecaprenyl-pyrophosphoryl-MurNAc-pentapeptide (lipid intermediate I) to form undecaprenyl-pyrophosphoryl-MurNAc-(pentapeptide)GlcNAc (lipid intermediate II). This Deinococcus radiodurans (strain ATCC 13939 / DSM 20539 / JCM 16871 / CCUG 27074 / LMG 4051 / NBRC 15346 / NCIMB 9279 / VKM B-1422 / R1) protein is UDP-N-acetylglucosamine--N-acetylmuramyl-(pentapeptide) pyrophosphoryl-undecaprenol N-acetylglucosamine transferase.